We begin with the raw amino-acid sequence, 269 residues long: Interleukin-1 beta (269 aa).

The propeptide occupies 1–116; the sequence is MAEVPELASE…TRNNDACVHD (116 aa).

Belongs to the IL-1 family. As to quaternary structure, monomer. In its precursor form, weakly interacts with full-length MEFV; the mature cytokine does not interact at all. Interacts with integrins ITGAV:ITGBV and ITGA5:ITGB1; integrin-binding is required for IL1B signaling. Interacts with cargo receptor TMED10; the interaction is direct and is required for the secretion of IL1B mature form. Interacts with HSP90AB1; the interaction facilitates cargo translocation into the ERGIC. Interacts with HSP90B1; the interaction facilitates cargo translocation into the ERGIC.

It is found in the cytoplasm. The protein localises to the cytosol. It localises to the secreted. The protein resides in the lysosome. Its subcellular location is the extracellular exosome. Its function is as follows. Potent pro-inflammatory cytokine. Initially discovered as the major endogenous pyrogen, induces prostaglandin synthesis, neutrophil influx and activation, T-cell activation and cytokine production, B-cell activation and antibody production, and fibroblast proliferation and collagen production. Promotes Th17 differentiation of T-cells. Synergizes with IL12/interleukin-12 to induce IFNG synthesis from T-helper 1 (Th1) cells. Plays a role in angiogenesis by inducing VEGF production synergistically with TNF and IL6. Involved in transduction of inflammation downstream of pyroptosis: its mature form is specifically released in the extracellular milieu by passing through the gasdermin-D (GSDMD) pore. This Macaca nemestrina (Pig-tailed macaque) protein is Interleukin-1 beta (IL1B).